We begin with the raw amino-acid sequence, 139 residues long: Nucleoside diphosphate kinase (139 aa).

ATP is bound by residues Lys-11, Phe-59, Arg-87, Thr-93, Arg-104, and Asn-114. His-117 (pros-phosphohistidine intermediate) is an active-site residue.

It belongs to the NDK family. Homotetramer. It depends on Mg(2+) as a cofactor.

It localises to the cytoplasm. It carries out the reaction a 2'-deoxyribonucleoside 5'-diphosphate + ATP = a 2'-deoxyribonucleoside 5'-triphosphate + ADP. The enzyme catalyses a ribonucleoside 5'-diphosphate + ATP = a ribonucleoside 5'-triphosphate + ADP. Its function is as follows. Major role in the synthesis of nucleoside triphosphates other than ATP. The ATP gamma phosphate is transferred to the NDP beta phosphate via a ping-pong mechanism, using a phosphorylated active-site intermediate. The protein is Nucleoside diphosphate kinase of Moorella thermoacetica (strain ATCC 39073 / JCM 9320).